The following is a 197-amino-acid chain: Small ribosomal subunit protein uS2 (197 aa).

The protein belongs to the universal ribosomal protein uS2 family.

This Archaeoglobus fulgidus (strain ATCC 49558 / DSM 4304 / JCM 9628 / NBRC 100126 / VC-16) protein is Small ribosomal subunit protein uS2 (rps2).